The chain runs to 306 residues: Recombination-associated protein RdgC (306 aa).

Belongs to the RdgC family.

It localises to the cytoplasm. The protein resides in the nucleoid. Its function is as follows. May be involved in recombination. The polypeptide is Recombination-associated protein RdgC (Pseudomonas putida (strain GB-1)).